The primary structure comprises 756 residues: Tubulin glycylase 3B (756 aa).

The segment at 104–123 (TPLPRTVTSSPTAPEAQKRQ) is disordered. Positions 272–629 (LEERMAFIED…DLPKNPTAAT (358 aa)) constitute a TTL domain. ATP-binding positions include 440 to 443 (QKYI), Lys453, and Asp455. Residues 709-736 (ITKKKKLSASAGSSTAASAQPSTQNLTT) are disordered. Residues 716 to 727 (SASAGSSTAASA) show a composition bias toward low complexity.

Its subcellular location is the cytoplasm. It localises to the cytoskeleton. The protein resides in the nucleus. Functionally, essential glycylase which modifies both tubulin and non-tubulin proteins, generating side chains of glycine on the gamma-carboxyl groups of specific glutamate residues of target proteins. Monoglycylates alpha-tubulin by adding a single glycine chain to generate monoglycine side chains, but is not involved in elongation step to generate polyglycine side chains on alpha-tubulin. Has the ability to both mono- and polyglycylate non-tubulin proteins such as up (Troponin T). Required for early steps of spermatogenesis. The chain is Tubulin glycylase 3B (TTLL3B) from Drosophila melanogaster (Fruit fly).